The sequence spans 131 residues: Inner membrane protein YecN (131 aa).

Residues 1-107 are Cytoplasmic-facing; it reads MVSALYAVLS…RWRRSGMSAT (107 aa). A helical membrane pass occupies residues 108–128; that stretch reads WCALLLMVLANLWYMPWELVF. The Periplasmic portion of the chain corresponds to 129–131; it reads SLR.

The protein resides in the cell inner membrane. This Escherichia coli O6:H1 (strain CFT073 / ATCC 700928 / UPEC) protein is Inner membrane protein YecN (yecN).